The sequence spans 264 residues: tRNA (guanine-N(1)-)-methyltransferase (264 aa).

S-adenosyl-L-methionine-binding positions include glycine 133 and 152–157 (LGDFVM). Residues 240-251 (QRRPDLWRKARG) are compositionally biased toward basic and acidic residues. Residues 240–264 (QRRPDLWRKARGGEPPADESGEVRR) are disordered. Residues 255–264 (PADESGEVRR) show a composition bias toward acidic residues.

The protein belongs to the RNA methyltransferase TrmD family. Homodimer.

Its subcellular location is the cytoplasm. It carries out the reaction guanosine(37) in tRNA + S-adenosyl-L-methionine = N(1)-methylguanosine(37) in tRNA + S-adenosyl-L-homocysteine + H(+). Specifically methylates guanosine-37 in various tRNAs. This Sorangium cellulosum (strain So ce56) (Polyangium cellulosum (strain So ce56)) protein is tRNA (guanine-N(1)-)-methyltransferase.